A 310-amino-acid polypeptide reads, in one-letter code: Polyprenyl transferase ntnF (310 aa).

The next 8 membrane-spanning stretches (helical) occupy residues 30 to 50, 63 to 83, 110 to 130, 154 to 174, 185 to 205, 230 to 250, 255 to 275, and 286 to 306; these read HTPE…FYAI, FLGI…WNDI, AMVA…AMLG, IWAP…PPWV, LPAS…LIYA, ACLT…AFEA, FLWV…ILSL, and IFLV…TDVW.

Belongs to the UbiA prenyltransferase family. It depends on Mg(2+) as a cofactor.

The protein resides in the membrane. It participates in secondary metabolite biosynthesis; terpenoid biosynthesis. In terms of biological role, olyprenyl transferase; part of the gene cluster that mediates the biosynthesis of the meroterpenoids nectripenoids A and B, as well as cochliquninone D and isocochliquninone E. The pathway probably begins with the HR-PKS ntnH that catalyzes two chain-extension steps to form a reduced triketide, which then primes the SAT domain in the NR-PKS ntnG to initiate three more cycles of extension to give a linear hexaketide corresponding to the polyketide part of nectripenoids. The FAD-dependent monooxygenase ntnJ then performs an oxidative decarboxylation at C11 of the ntnH/ntnG product, via an electrophilic aromatic hydroxylation with concomitant ipso-decarboxylation. The membrane-bound polyprenyl transferase ntnF then introduces a farnesyl group before the FAD-dependent monooxygenase ntnK functions as the first epoxidase on terminal C12'-C13' olefin, followed by a second epoxidation on C7'-C8' catalyzed by ntnA. The terpene cyclase/mutase ntnI then initiates the sequential tricyclic ring formation through protonation of the terminal epoxide and catalyzes the regioselective and stereoselective 6/6/6-tricyclic ring formation. The cytochrome P450 monooxygenase ntnM may then hydroxylate C1'. The chain is Polyprenyl transferase ntnF from Nectria sp.